We begin with the raw amino-acid sequence, 633 residues long: Probable methyltransferase PMT17 (633 aa).

Residues 1–18 (MAKENSGHHHQTEARRKK) lie on the Cytoplasmic side of the membrane. The chain crosses the membrane as a helical; Signal-anchor for type II membrane protein span at residues 19–39 (LTLILGVSGLCILFYVLGAWQ). At 40 to 633 (ANTVPSSISK…NNNNNNNNNN (594 aa)) the chain is on the lumenal side. Positions 50–71 (LGCETQSNPSSSSSSSSSSESA) are disordered. The span at 59–70 (SSSSSSSSSSES) shows a compositional bias: low complexity. Asn-87 carries N-linked (GlcNAc...) asparagine glycosylation.

This sequence belongs to the methyltransferase superfamily.

It is found in the endoplasmic reticulum membrane. The sequence is that of Probable methyltransferase PMT17 from Arabidopsis thaliana (Mouse-ear cress).